We begin with the raw amino-acid sequence, 251 residues long: Cholesterol 25-hydroxylase-like protein (251 aa).

The next 3 helical transmembrane spans lie at 22-42 (FFPV…FVLL), 69-89 (WSCL…LSVL), and 108-128 (VVWD…VWHL). Positions 113–247 (AACLLLFDFQ…FTHWDKLFGT (135 aa)) constitute a Fatty acid hydroxylase domain. The Histidine box-1 signature appears at 126-130 (WHLLH). The Histidine box-2 motif lies at 141–145 (HKVHH). The short motif at 222 to 228 (HHDVHHQ) is the Histidine box-3 element.

This sequence belongs to the sterol desaturase family. It depends on Fe cation as a cofactor.

The protein resides in the endoplasmic reticulum membrane. The catalysed reaction is cholesterol + AH2 + O2 = 25-hydroxycholesterol + A + H2O. It carries out the reaction cholesterol + NADPH + O2 + H(+) = 25-hydroxycholesterol + NADP(+) + H2O. Its function is as follows. Catalyzes the formation of 25-hydroxycholesterol from cholesterol, leading to repress cholesterol biosynthetic enzymes. Plays a key role in cell positioning and movement in lymphoid tissues: 25-hydroxycholesterol is an intermediate in biosynthesis of 7-alpha,25-dihydroxycholesterol (7-alpha,25-OHC), an oxysterol that acts as a ligand for the G protein-coupled receptor GPR183/EBI2, a chemotactic receptor for a number of lymphoid cells. May play an important role in regulating lipid metabolism by synthesizing a corepressor that blocks sterol regulatory element binding protein (SREBP) processing. In testis, production of 25-hydroxycholesterol by macrophages may play a role in Leydig cell differentiation. This Danio rerio (Zebrafish) protein is Cholesterol 25-hydroxylase-like protein (ch25h).